The sequence spans 239 residues: Fatty acid metabolism regulator protein (239 aa).

The 69-residue stretch at 6 to 74 (QSPAGFAEEY…HGKPTKINNF (69 aa)) folds into the HTH gntR-type domain. A DNA-binding region (H-T-H motif) is located at residues 34–53 (ERELSELIGVTRTTLREVLQ).

Homodimer.

The protein localises to the cytoplasm. Multifunctional regulator of fatty acid metabolism. This is Fatty acid metabolism regulator protein from Pectobacterium atrosepticum (strain SCRI 1043 / ATCC BAA-672) (Erwinia carotovora subsp. atroseptica).